Reading from the N-terminus, the 547-residue chain is CTP synthase (547 aa).

The tract at residues 1-267 (MKTKFIFITG…DQKIAIMLRL (267 aa)) is amidoligase domain. Residue Ser-14 participates in CTP binding. Ser-14 lines the UTP pocket. ATP contacts are provided by residues 15 to 20 (SLGKGL) and Asp-72. Mg(2+) contacts are provided by Asp-72 and Glu-141. Residues 148-150 (DIE), 188-193 (KTKPTQ), and Lys-224 each bind CTP. UTP-binding positions include 188 to 193 (KTKPTQ) and Lys-224. The 254-residue stretch at 292-545 (TIGIVGKYVD…IRAAKTHPAG (254 aa)) folds into the Glutamine amidotransferase type-1 domain. Gly-354 lines the L-glutamine pocket. The active-site Nucleophile; for glutamine hydrolysis is the Cys-381. L-glutamine-binding positions include 382–385 (LGMQ), Glu-405, and Arg-473. Residues His-518 and Glu-520 contribute to the active site.

The protein belongs to the CTP synthase family. In terms of assembly, homotetramer.

It catalyses the reaction UTP + L-glutamine + ATP + H2O = CTP + L-glutamate + ADP + phosphate + 2 H(+). It carries out the reaction L-glutamine + H2O = L-glutamate + NH4(+). The catalysed reaction is UTP + NH4(+) + ATP = CTP + ADP + phosphate + 2 H(+). It functions in the pathway pyrimidine metabolism; CTP biosynthesis via de novo pathway; CTP from UDP: step 2/2. With respect to regulation, allosterically activated by GTP, when glutamine is the substrate; GTP has no effect on the reaction when ammonia is the substrate. The allosteric effector GTP functions by stabilizing the protein conformation that binds the tetrahedral intermediate(s) formed during glutamine hydrolysis. Inhibited by the product CTP, via allosteric rather than competitive inhibition. Catalyzes the ATP-dependent amination of UTP to CTP with either L-glutamine or ammonia as the source of nitrogen. Regulates intracellular CTP levels through interactions with the four ribonucleotide triphosphates. The protein is CTP synthase of Nitratidesulfovibrio vulgaris (strain DP4) (Desulfovibrio vulgaris).